The sequence spans 516 residues: Rho guanine nucleotide exchange factor 9 (516 aa).

The SH3 domain occupies 8 to 67; it reads DSIVSAEAVWDHVTMANRELAFKAGDVIKVLDASNKDWWWGQIDDEEGWFPASFVRLWVN. The interaction with GPHN stretch occupies residues 100-110; sequence RDQMRANVINE. Residues 103–287 enclose the DH domain; it reads MRANVINEIM…RNVTQQINER (185 aa). The PH domain maps to 318-425; sequence ELIYTGEMAW…WLRAFREERK (108 aa). The segment at 453–480 is disordered; the sequence is PKQKGVNSARSVPPSYPPPQDPLNHGQY. Serine 502 is subject to Phosphoserine.

Interacts with GPHN. Detected in brain. Detected at low levels in heart.

It is found in the cytoplasm. Its subcellular location is the postsynaptic density. Acts as a guanine nucleotide exchange factor (GEF) for CDC42. Promotes formation of GPHN clusters. The sequence is that of Rho guanine nucleotide exchange factor 9 (ARHGEF9) from Homo sapiens (Human).